The sequence spans 563 residues: Arginine--tRNA ligase (563 aa).

The 'HIGH' region motif lies at 121-131 (PNIAKPFSIGH).

The protein belongs to the class-I aminoacyl-tRNA synthetase family. As to quaternary structure, monomer.

The protein resides in the cytoplasm. The enzyme catalyses tRNA(Arg) + L-arginine + ATP = L-arginyl-tRNA(Arg) + AMP + diphosphate. The protein is Arginine--tRNA ligase of Streptococcus equi subsp. equi (strain 4047).